A 268-amino-acid chain; its full sequence is Tryptophan synthase alpha chain (268 aa).

Residues Glu49 and Asp60 each act as proton acceptor in the active site.

It belongs to the TrpA family. In terms of assembly, tetramer of two alpha and two beta chains.

The enzyme catalyses (1S,2R)-1-C-(indol-3-yl)glycerol 3-phosphate + L-serine = D-glyceraldehyde 3-phosphate + L-tryptophan + H2O. The protein operates within amino-acid biosynthesis; L-tryptophan biosynthesis; L-tryptophan from chorismate: step 5/5. Its function is as follows. The alpha subunit is responsible for the aldol cleavage of indoleglycerol phosphate to indole and glyceraldehyde 3-phosphate. This chain is Tryptophan synthase alpha chain, found in Xylella fastidiosa (strain M23).